We begin with the raw amino-acid sequence, 520 residues long: Ubiquitin carboxyl-terminal hydrolase MINDY-1 (520 aa).

The segment at 1–155 (MADSCADTVD…ENEGAVAGAM (155 aa)) is disordered. The span at 26–37 (KNEDLEQTKPQK) shows a compositional bias: basic and acidic residues. A compositionally biased stretch (polar residues) spans 43–54 (TEESSACVSQIK). A compositionally biased stretch (low complexity) spans 77–86 (ATSSASVTSK). Polar residues-rich tracts occupy residues 93 to 112 (VINS…SFSM) and 132 to 146 (SAKS…SVQE). The active-site Nucleophile is the C189. H371 (proton acceptor) is an active-site residue. Disordered regions lie at residues 422 to 441 (SQKP…QQMQ) and 467 to 520 (ELAR…CCIL). Residues 441–479 (QIDQDYLVAMSLQQEQGEAPGPLSDLELARQLQQEEYQQ) form a ubiquitin-binding domain (UBD) region. Low complexity predominate over residues 469 to 498 (ARQLQQEEYQQPQTQQQQQQQPSAGQMRGQ). Residues 511–520 (KKEETDCCIL) are compositionally biased toward basic and acidic residues.

Belongs to the MINDY deubiquitinase family. FAM63 subfamily.

It catalyses the reaction Thiol-dependent hydrolysis of ester, thioester, amide, peptide and isopeptide bonds formed by the C-terminal Gly of ubiquitin (a 76-residue protein attached to proteins as an intracellular targeting signal).. Its function is as follows. Hydrolase that can specifically remove 'Lys-48'-linked conjugated ubiquitin from proteins. May play a regulatory role at the level of protein turnover. The chain is Ubiquitin carboxyl-terminal hydrolase MINDY-1 (mindy1) from Danio rerio (Zebrafish).